The chain runs to 248 residues: Flagellar L-ring protein (248 aa).

The N-terminal stretch at 1-23 (MRHAFRHSVRTLGLLGLLPVLSA) is a signal peptide. Residue C24 is the site of N-palmitoyl cysteine attachment. Residue C24 is the site of S-diacylglycerol cysteine attachment.

The protein belongs to the FlgH family. In terms of assembly, the basal body constitutes a major portion of the flagellar organelle and consists of four rings (L,P,S, and M) mounted on a central rod.

Its subcellular location is the cell outer membrane. The protein resides in the bacterial flagellum basal body. In terms of biological role, assembles around the rod to form the L-ring and probably protects the motor/basal body from shearing forces during rotation. The polypeptide is Flagellar L-ring protein (Gluconobacter oxydans (strain 621H) (Gluconobacter suboxydans)).